The following is a 212-amino-acid chain: Pyridoxine/pyridoxamine 5'-phosphate oxidase (212 aa).

Substrate-binding positions include 8 to 11 (RKNY) and Lys-66. Residues 61 to 66 (RIVLIK), 76 to 77 (FT), Arg-82, Lys-83, and Gln-105 contribute to the FMN site. The substrate site is built by Tyr-123, Arg-127, and Ser-131. FMN is bound by residues 140 to 141 (QS) and Trp-184. Substrate is bound at residue 190-192 (RLH). Arg-194 lines the FMN pocket.

This sequence belongs to the pyridoxamine 5'-phosphate oxidase family. Homodimer. The cofactor is FMN.

It carries out the reaction pyridoxamine 5'-phosphate + O2 + H2O = pyridoxal 5'-phosphate + H2O2 + NH4(+). It catalyses the reaction pyridoxine 5'-phosphate + O2 = pyridoxal 5'-phosphate + H2O2. It functions in the pathway cofactor metabolism; pyridoxal 5'-phosphate salvage; pyridoxal 5'-phosphate from pyridoxamine 5'-phosphate: step 1/1. The protein operates within cofactor metabolism; pyridoxal 5'-phosphate salvage; pyridoxal 5'-phosphate from pyridoxine 5'-phosphate: step 1/1. In terms of biological role, catalyzes the oxidation of either pyridoxine 5'-phosphate (PNP) or pyridoxamine 5'-phosphate (PMP) into pyridoxal 5'-phosphate (PLP). The chain is Pyridoxine/pyridoxamine 5'-phosphate oxidase from Paraburkholderia phymatum (strain DSM 17167 / CIP 108236 / LMG 21445 / STM815) (Burkholderia phymatum).